We begin with the raw amino-acid sequence, 660 residues long: MGTPCQSARGPRTTPLPHCPPPCLPGAPDQQTRRLPPGWGQRTAPTQVGLADAASPDELQDQASGARPGGGNRVGAGRGRPGTPAPSRQSRRTGPAEQADHAHSNPTGGCSDPQRSPRTRQAGYALGEGSAGLGSRGPRPHPAFQVQWSARNPGCPRTWRRRSGAQRGHPPPGAGQRPSGPTGGRPAAPGAPGTPAAPGPGGGAAVPSGATPHPERGSGPADPPAAARLPPERQEPRLPQDLAAAQRCPAGPPPTRSGAAAQRTHRRPPGCPRSARNPGCPRTWRRRSGAQRGHPPPGAGQRPSGPTGGRPAAPGAPGTPAAPGPGGGAAVPSGATPHPERGSGPADPPAAARLPPERQEPRLPQDLAAAQRCPAGPPPTRSGAAAQRTHRRPPGCPRSARNPGCPRTWRRRSGAQRGHPPPGAGQRPSGPTGGRPAAPGAPGTPAAPGPGGGAAVPSGATPHPERGSGPADPPAAARLPPERQEPRLPQDLAAAQRCPAGPPPTRSGAAAQRTHRRPPGCPRSARNPGCPRTWRRRSGAQRGHPPPGAGQRPSGPTGGRPAAPGAPGTPAAPGPGGGAAVPSGATPHPERGSGPADPPAAARLPPERQEPRLPQDLAAAQRCPAGPPPTRSGAAAQRTHRRPPGCPRSARNPGCPRTWR.

Residues 1-660 (MGTPCQSARG…RNPGCPRTWR (660 aa)) are disordered. Positions 67 to 80 (RPGGGNRVGAGRGR) are enriched in gly residues. The span at 104–116 (SNPTGGCSDPQRS) shows a compositional bias: polar residues. 4 consecutive repeat copies span residues 149 to 273 (SARN…GCPR), 274 to 398 (SARN…GCPR), 399 to 523 (SARN…GCPR), and 524 to 648 (SARN…GCPR). A 4 X 125 AA tandem repeats region spans residues 149–648 (SARNPGCPRT…THRRPPGCPR (500 aa)). 4 stretches are compositionally biased toward low complexity: residues 177-196 (RPSGPTGGRPAAPGAPGTPA), 302-321 (RPSGPTGGRPAAPGAPGTPA), 427-446 (RPSGPTGGRPAAPGAPGTPA), and 552-571 (RPSGPTGGRPAAPGAPGTPA).

This is an uncharacterized protein from Homo sapiens (Human).